Reading from the N-terminus, the 97-residue chain is Large ribosomal subunit protein bL31B (97 aa).

The protein belongs to the bacterial ribosomal protein bL31 family. Type B subfamily. As to quaternary structure, part of the 50S ribosomal subunit.

This is Large ribosomal subunit protein bL31B (rpmE2) from Mycolicibacterium paratuberculosis (strain ATCC BAA-968 / K-10) (Mycobacterium paratuberculosis).